We begin with the raw amino-acid sequence, 561 residues long: Serine palmitoyltransferase 2 (561 aa).

A helical membrane pass occupies residues 57–77 (PYYISLLTYLNYLILIILGHV). Position 366 is an N6-(pyridoxal phosphate)lysine (K366). Residues 443 to 463 (LGFIVYGVADSPVIPLLLYCP) form a helical membrane-spanning segment.

This sequence belongs to the class-II pyridoxal-phosphate-dependent aminotransferase family. As to quaternary structure, LCB1 and LCB2 encode essential subunits of the enzyme and form a heterodimer. Component of the SPOTS complex, at least composed of LCB1/2 (LCB1 and/or LCB2), ORM1/2 (ORM1 and/or ORM2), SAC1 and TSC3. Interacts with LCB1 and TSC3. Pyridoxal 5'-phosphate is required as a cofactor.

The protein resides in the cytoplasm. Its subcellular location is the endoplasmic reticulum. It localises to the membrane. The enzyme catalyses L-serine + hexadecanoyl-CoA + H(+) = 3-oxosphinganine + CO2 + CoA. It participates in lipid metabolism; sphingolipid metabolism. In terms of biological role, catalytic subunit of serine palmitoyltransferase (SPT), which catalyzes the committed step in the synthesis of sphingolipids, the condensation of serine with palmitoyl CoA to form the long chain base 3-ketosphinganine. This Saccharomyces cerevisiae (strain ATCC 204508 / S288c) (Baker's yeast) protein is Serine palmitoyltransferase 2 (LCB2).